A 296-amino-acid chain; its full sequence is Protoheme IX farnesyltransferase (296 aa).

The next 9 helical transmembrane spans lie at valine 9 to alanine 29, tyrosine 36 to phenylalanine 56, alanine 84 to glycine 104, leucine 108 to methionine 128, valine 133 to alanine 153, leucine 163 to phenylalanine 183, isoleucine 209 to alanine 229, leucine 234 to valine 254, and phenylalanine 265 to valine 285.

It belongs to the UbiA prenyltransferase family. Protoheme IX farnesyltransferase subfamily.

The protein localises to the cell inner membrane. It carries out the reaction heme b + (2E,6E)-farnesyl diphosphate + H2O = Fe(II)-heme o + diphosphate. It participates in porphyrin-containing compound metabolism; heme O biosynthesis; heme O from protoheme: step 1/1. In terms of biological role, converts heme B (protoheme IX) to heme O by substitution of the vinyl group on carbon 2 of heme B porphyrin ring with a hydroxyethyl farnesyl side group. The protein is Protoheme IX farnesyltransferase of Citrobacter koseri (strain ATCC BAA-895 / CDC 4225-83 / SGSC4696).